The chain runs to 150 residues: Deoxyuridine 5'-triphosphate nucleotidohydrolase (150 aa).

Substrate-binding positions include Arg-70–Gly-72, Asn-82, Leu-86–Asp-88, and Met-96.

It belongs to the dUTPase family. Requires Mg(2+) as cofactor.

It carries out the reaction dUTP + H2O = dUMP + diphosphate + H(+). It participates in pyrimidine metabolism; dUMP biosynthesis; dUMP from dCTP (dUTP route): step 2/2. Functionally, this enzyme is involved in nucleotide metabolism: it produces dUMP, the immediate precursor of thymidine nucleotides and it decreases the intracellular concentration of dUTP so that uracil cannot be incorporated into DNA. The polypeptide is Deoxyuridine 5'-triphosphate nucleotidohydrolase (Baumannia cicadellinicola subsp. Homalodisca coagulata).